Reading from the N-terminus, the 303-residue chain is Methionyl-tRNA formyltransferase (303 aa).

111–114 (SLLP) is a (6S)-5,6,7,8-tetrahydrofolate binding site.

This sequence belongs to the Fmt family.

It catalyses the reaction L-methionyl-tRNA(fMet) + (6R)-10-formyltetrahydrofolate = N-formyl-L-methionyl-tRNA(fMet) + (6S)-5,6,7,8-tetrahydrofolate + H(+). Attaches a formyl group to the free amino group of methionyl-tRNA(fMet). The formyl group appears to play a dual role in the initiator identity of N-formylmethionyl-tRNA by promoting its recognition by IF2 and preventing the misappropriation of this tRNA by the elongation apparatus. In Ehrlichia chaffeensis (strain ATCC CRL-10679 / Arkansas), this protein is Methionyl-tRNA formyltransferase.